We begin with the raw amino-acid sequence, 505 residues long: Glutamate--tRNA ligase (505 aa).

Residues P12 to T22 carry the 'HIGH' region motif. The 'KMSKS' region motif lies at K253–R257. K256 is an ATP binding site.

Belongs to the class-I aminoacyl-tRNA synthetase family. Glutamate--tRNA ligase type 1 subfamily. In terms of assembly, monomer.

It localises to the cytoplasm. The enzyme catalyses tRNA(Glu) + L-glutamate + ATP = L-glutamyl-tRNA(Glu) + AMP + diphosphate. Functionally, catalyzes the attachment of glutamate to tRNA(Glu) in a two-step reaction: glutamate is first activated by ATP to form Glu-AMP and then transferred to the acceptor end of tRNA(Glu). The chain is Glutamate--tRNA ligase from Chlamydia felis (strain Fe/C-56) (Chlamydophila felis).